The sequence spans 117 residues: Large ribosomal subunit protein bL19 (117 aa).

The protein belongs to the bacterial ribosomal protein bL19 family.

This protein is located at the 30S-50S ribosomal subunit interface and may play a role in the structure and function of the aminoacyl-tRNA binding site. This Thioalkalivibrio sulfidiphilus (strain HL-EbGR7) protein is Large ribosomal subunit protein bL19.